The following is a 524-amino-acid chain: Chromosomal replication initiator protein DnaA (524 aa).

A domain I, interacts with DnaA modulators region spans residues 1-72 (MNDFWQHCSA…DLARDFWNAP (72 aa)). Positions 72–187 (PIEVQFVLDP…GEADSMYERS (116 aa)) are domain II. The tract at residues 188-404 (KLNPVLTFDN…GALRKILAYS (217 aa)) is domain III, AAA+ region. G232, G234, K235, and T236 together coordinate ATP. Residues 405–524 (KFHGREISIE…LHVLEQTLKG (120 aa)) are domain IV, binds dsDNA.

This sequence belongs to the DnaA family. As to quaternary structure, oligomerizes as a right-handed, spiral filament on DNA at oriC.

The protein resides in the cytoplasm. Functionally, plays an essential role in the initiation and regulation of chromosomal replication. ATP-DnaA binds to the origin of replication (oriC) to initiate formation of the DNA replication initiation complex once per cell cycle. Binds the DnaA box (a 9 base pair repeat at the origin) and separates the double-stranded (ds)DNA. Forms a right-handed helical filament on oriC DNA; dsDNA binds to the exterior of the filament while single-stranded (ss)DNA is stabiized in the filament's interior. The ATP-DnaA-oriC complex binds and stabilizes one strand of the AT-rich DNA unwinding element (DUE), permitting loading of DNA polymerase. After initiation quickly degrades to an ADP-DnaA complex that is not apt for DNA replication. Binds acidic phospholipids. The chain is Chromosomal replication initiator protein DnaA from Burkholderia multivorans (strain ATCC 17616 / 249).